The primary structure comprises 237 residues: Purine nucleoside phosphorylase DeoD-type (237 aa).

His-4 provides a ligand contact to a purine D-ribonucleoside. Phosphate-binding positions include Gly-20, Arg-24, Arg-43, and Arg-87–Thr-90. Residues Glu-179–Glu-181 and Ser-203–Asp-204 each bind a purine D-ribonucleoside. Asp-204 (proton donor) is an active-site residue.

This sequence belongs to the PNP/UDP phosphorylase family. Homohexamer; trimer of homodimers.

The enzyme catalyses a purine D-ribonucleoside + phosphate = a purine nucleobase + alpha-D-ribose 1-phosphate. It catalyses the reaction a purine 2'-deoxy-D-ribonucleoside + phosphate = a purine nucleobase + 2-deoxy-alpha-D-ribose 1-phosphate. Its function is as follows. Catalyzes the reversible phosphorolytic breakdown of the N-glycosidic bond in the beta-(deoxy)ribonucleoside molecules, with the formation of the corresponding free purine bases and pentose-1-phosphate. The sequence is that of Purine nucleoside phosphorylase DeoD-type from Streptococcus uberis (strain ATCC BAA-854 / 0140J).